The chain runs to 89 residues: Small ribosomal subunit protein uS15 (89 aa).

This sequence belongs to the universal ribosomal protein uS15 family. Part of the 30S ribosomal subunit. Forms a bridge to the 50S subunit in the 70S ribosome, contacting the 23S rRNA.

In terms of biological role, one of the primary rRNA binding proteins, it binds directly to 16S rRNA where it helps nucleate assembly of the platform of the 30S subunit by binding and bridging several RNA helices of the 16S rRNA. Its function is as follows. Forms an intersubunit bridge (bridge B4) with the 23S rRNA of the 50S subunit in the ribosome. This is Small ribosomal subunit protein uS15 from Shewanella putrefaciens (strain CN-32 / ATCC BAA-453).